Consider the following 422-residue polypeptide: GPI mannosyltransferase 1 (422 aa).

Helical transmembrane passes span 10 to 30, 82 to 102, 162 to 182, 216 to 236, 282 to 302, 327 to 347, 352 to 372, and 385 to 405; these read TTPLFTISLLLRLGLLFYGIY, FPAFGKLVFAAADLLAGWLIL, IILGLSVHFKIYPFIYAPAIV, LKFGLLSLITFMILNLVMFAI, IESFAFLPQLLLSCVLIPLAL, SQYFLWYMIFLPLYLPNSSFL, LGIFALLLWIVSQAAWLQQGY, and GLWLASIAFFLVNCWILGVII.

Belongs to the PIGM family.

The protein resides in the endoplasmic reticulum membrane. It participates in glycolipid biosynthesis; glycosylphosphatidylinositol-anchor biosynthesis. Functionally, mannosyltransferase involved in glycosylphosphatidylinositol-anchor biosynthesis. Transfers the first alpha-1,4-mannose to GlcN-acyl-PI during GPI precursor assembly. Required for cell wall integrity. This is GPI mannosyltransferase 1 (GPI14) from Gibberella zeae (strain ATCC MYA-4620 / CBS 123657 / FGSC 9075 / NRRL 31084 / PH-1) (Wheat head blight fungus).